A 113-amino-acid polypeptide reads, in one-letter code: N-alpha-acetyltransferase 38-A, NatC auxiliary subunit (113 aa).

The segment at 1–29 is disordered; sequence MAAVLEENGCSRQSSPSAGDSDAEPGDTA. Residues 28–106 enclose the Sm domain; sequence TARHKLESLL…IVSIQVELES (79 aa).

The protein belongs to the snRNP Sm proteins family. As to quaternary structure, component of the N-terminal acetyltransferase C (NatC) complex, which is composed of naa35, naa38 and naa30.

Its subcellular location is the cytoplasm. Auxillary component of the N-terminal acetyltransferase C (NatC) complex which catalyzes acetylation of N-terminal methionine residues. This chain is N-alpha-acetyltransferase 38-A, NatC auxiliary subunit (naa38-a), found in Xenopus laevis (African clawed frog).